We begin with the raw amino-acid sequence, 884 residues long: Alanine--tRNA ligase (884 aa).

Zn(2+) contacts are provided by His565, His569, Cys675, and His679.

This sequence belongs to the class-II aminoacyl-tRNA synthetase family. Requires Zn(2+) as cofactor.

It localises to the cytoplasm. It catalyses the reaction tRNA(Ala) + L-alanine + ATP = L-alanyl-tRNA(Ala) + AMP + diphosphate. Catalyzes the attachment of alanine to tRNA(Ala) in a two-step reaction: alanine is first activated by ATP to form Ala-AMP and then transferred to the acceptor end of tRNA(Ala). Also edits incorrectly charged Ser-tRNA(Ala) and Gly-tRNA(Ala) via its editing domain. The chain is Alanine--tRNA ligase from Maricaulis maris (strain MCS10) (Caulobacter maris).